The following is a 227-amino-acid chain: Enolase-phosphatase E1 (227 aa).

Belongs to the HAD-like hydrolase superfamily. MasA/MtnC family. In terms of assembly, monomer. Mg(2+) is required as a cofactor.

The enzyme catalyses 5-methylsulfanyl-2,3-dioxopentyl phosphate + H2O = 1,2-dihydroxy-5-(methylsulfanyl)pent-1-en-3-one + phosphate. Its pathway is amino-acid biosynthesis; L-methionine biosynthesis via salvage pathway; L-methionine from S-methyl-5-thio-alpha-D-ribose 1-phosphate: step 3/6. It functions in the pathway amino-acid biosynthesis; L-methionine biosynthesis via salvage pathway; L-methionine from S-methyl-5-thio-alpha-D-ribose 1-phosphate: step 4/6. Functionally, bifunctional enzyme that catalyzes the enolization of 2,3-diketo-5-methylthiopentyl-1-phosphate (DK-MTP-1-P) into the intermediate 2-hydroxy-3-keto-5-methylthiopentenyl-1-phosphate (HK-MTPenyl-1-P), which is then dephosphorylated to form the acireductone 1,2-dihydroxy-3-keto-5-methylthiopentene (DHK-MTPene). This chain is Enolase-phosphatase E1, found in Persephonella marina (strain DSM 14350 / EX-H1).